A 65-amino-acid chain; its full sequence is UPF0434 protein VFMJ11_A0475 (65 aa).

The protein belongs to the UPF0434 family.

The protein is UPF0434 protein VFMJ11_A0475 of Aliivibrio fischeri (strain MJ11) (Vibrio fischeri).